Here is a 285-residue protein sequence, read N- to C-terminus: Bifunctional protein FolD (285 aa).

Residues 169-171 (GRS), S194, and I235 contribute to the NADP(+) site.

It belongs to the tetrahydrofolate dehydrogenase/cyclohydrolase family. In terms of assembly, homodimer.

The enzyme catalyses (6R)-5,10-methylene-5,6,7,8-tetrahydrofolate + NADP(+) = (6R)-5,10-methenyltetrahydrofolate + NADPH. The catalysed reaction is (6R)-5,10-methenyltetrahydrofolate + H2O = (6R)-10-formyltetrahydrofolate + H(+). It participates in one-carbon metabolism; tetrahydrofolate interconversion. Catalyzes the oxidation of 5,10-methylenetetrahydrofolate to 5,10-methenyltetrahydrofolate and then the hydrolysis of 5,10-methenyltetrahydrofolate to 10-formyltetrahydrofolate. The chain is Bifunctional protein FolD from Microcystis aeruginosa (strain NIES-843 / IAM M-2473).